The chain runs to 512 residues: NADH-quinone oxidoreductase subunit M (512 aa).

Transmembrane regions (helical) follow at residues 3–23, 36–56, 84–104, 112–132, 133–153, 166–186, 208–228, 251–271, 285–305, 313–333, 341–361, 384–404, 419–439, and 464–484; these read NLLS…AVVS, WVAL…LAGF, ISIL…ASAW, EYMI…VALD, LVLF…IIGI, FFLY…AMYM, FLGW…AFFA, PTAG…YGFL, MTTF…LVAL, LIAY…FAAN, IFQM…VGVI, ALIF…SGFV, WVAL…LWLY, and AIFA…SLVT.

Belongs to the complex I subunit 4 family.

It is found in the cell membrane. The catalysed reaction is a quinone + NADH + 5 H(+)(in) = a quinol + NAD(+) + 4 H(+)(out). In terms of biological role, NDH-1 shuttles electrons from NADH, via FMN and iron-sulfur (Fe-S) centers, to quinones in the respiratory chain. The immediate electron acceptor for the enzyme in this species is believed to be ubiquinone. Couples the redox reaction to proton translocation (for every two electrons transferred, four hydrogen ions are translocated across the cytoplasmic membrane), and thus conserves the redox energy in a proton gradient. In Rhodobacter capsulatus (Rhodopseudomonas capsulata), this protein is NADH-quinone oxidoreductase subunit M (nuoM).